A 306-amino-acid chain; its full sequence is Porphobilinogen deaminase (306 aa).

S-(dipyrrolylmethanemethyl)cysteine is present on Cys-241.

It belongs to the HMBS family. In terms of assembly, monomer. Requires dipyrromethane as cofactor.

It carries out the reaction 4 porphobilinogen + H2O = hydroxymethylbilane + 4 NH4(+). It participates in porphyrin-containing compound metabolism; protoporphyrin-IX biosynthesis; coproporphyrinogen-III from 5-aminolevulinate: step 2/4. Its function is as follows. Tetrapolymerization of the monopyrrole PBG into the hydroxymethylbilane pre-uroporphyrinogen in several discrete steps. In Acidithiobacillus ferrooxidans (strain ATCC 23270 / DSM 14882 / CIP 104768 / NCIMB 8455) (Ferrobacillus ferrooxidans (strain ATCC 23270)), this protein is Porphobilinogen deaminase.